Reading from the N-terminus, the 179-residue chain is Large ribosomal subunit protein uL5 (179 aa).

The protein belongs to the universal ribosomal protein uL5 family. In terms of assembly, part of the 50S ribosomal subunit; part of the 5S rRNA/L5/L18/L25 subcomplex. Contacts the 5S rRNA and the P site tRNA. Forms a bridge to the 30S subunit in the 70S ribosome.

Functionally, this is one of the proteins that bind and probably mediate the attachment of the 5S RNA into the large ribosomal subunit, where it forms part of the central protuberance. In the 70S ribosome it contacts protein S13 of the 30S subunit (bridge B1b), connecting the 2 subunits; this bridge is implicated in subunit movement. Contacts the P site tRNA; the 5S rRNA and some of its associated proteins might help stabilize positioning of ribosome-bound tRNAs. This chain is Large ribosomal subunit protein uL5, found in Vesicomyosocius okutanii subsp. Calyptogena okutanii (strain HA).